Here is a 269-residue protein sequence, read N- to C-terminus: tRNA pseudouridine synthase A (269 aa).

D51 functions as the Nucleophile in the catalytic mechanism. Y109 is a substrate binding site.

It belongs to the tRNA pseudouridine synthase TruA family. In terms of assembly, homodimer.

The catalysed reaction is uridine(38/39/40) in tRNA = pseudouridine(38/39/40) in tRNA. Its function is as follows. Formation of pseudouridine at positions 38, 39 and 40 in the anticodon stem and loop of transfer RNAs. This Aeromonas salmonicida (strain A449) protein is tRNA pseudouridine synthase A.